Reading from the N-terminus, the 102-residue chain is Small ribosomal subunit protein uS10 (102 aa).

It belongs to the universal ribosomal protein uS10 family. Part of the 30S ribosomal subunit.

In terms of biological role, involved in the binding of tRNA to the ribosomes. This Methanoculleus marisnigri (strain ATCC 35101 / DSM 1498 / JR1) protein is Small ribosomal subunit protein uS10.